The sequence spans 213 residues: Nicotinate-nucleotide adenylyltransferase (213 aa).

The protein belongs to the NadD family.

The catalysed reaction is nicotinate beta-D-ribonucleotide + ATP + H(+) = deamido-NAD(+) + diphosphate. It participates in cofactor biosynthesis; NAD(+) biosynthesis; deamido-NAD(+) from nicotinate D-ribonucleotide: step 1/1. In terms of biological role, catalyzes the reversible adenylation of nicotinate mononucleotide (NaMN) to nicotinic acid adenine dinucleotide (NaAD). This is Nicotinate-nucleotide adenylyltransferase from Salmonella typhi.